The sequence spans 56 residues: ComX pheromone (56 aa).

Positions 1–50 are excised as a propeptide; it reads MMQDLINYFLSYPEVLKKLKNREACLIGFSSNETETIIKAYNDYHLSSPT. At tryptophan 54 the chain carries Tryptophan derivative. Tryptophan 54 carries 3'-farnesyl-2',N2-cyclotryptophan lipidation.

Interacts directly with the sensor histidine kinase ComP and stimulates its activity. Post-translationally, trp-54 is modified by farnesylation, which is essential for activity. Modified by the tryptophan prenyltransferase ComQ before export to the extracellular environment. The type of isoprenyl derivative differs among the different pherotypes and depends on ComX primary sequence.

Its subcellular location is the secreted. Part of a major quorum-sensing system that regulates the development of genetic competence. Acts through the activation of the two-component regulatory system ComP/ComA composed of a sensor histidine kinase, ComP, and a response regulator, ComA. The chain is ComX pheromone from Bacillus mojavensis.